Here is a 500-residue protein sequence, read N- to C-terminus: Glucosylglycerol-phosphate synthase (500 aa).

Belongs to the glycosyltransferase 20 family.

The catalysed reaction is ADP-alpha-D-glucose + sn-glycerol 3-phosphate = 2-O-(alpha-D-glucopyranosyl)-sn-glycerol 3-phosphate + ADP + H(+). The protein operates within glycan metabolism; glucosylglycerol biosynthesis. Involved in salt tolerance by producing GG-phosphate from ADP-glucose and glycerol-3-phosphate (G3P), an intermediate in the synthesis of the osmolyte glucosylglycerol (GG). The protein is Glucosylglycerol-phosphate synthase (ggpS) of Picosynechococcus sp. (strain ATCC 27264 / PCC 7002 / PR-6) (Agmenellum quadruplicatum).